We begin with the raw amino-acid sequence, 352 residues long: Biotin synthase (352 aa).

Residues 44–262 (NRVQVSTLLS…LAVARILMPQ (219 aa)) enclose the Radical SAM core domain. The [4Fe-4S] cluster site is built by cysteine 59, cysteine 63, and cysteine 66. Residues cysteine 103, cysteine 134, cysteine 194, and arginine 266 each contribute to the [2Fe-2S] cluster site.

The protein belongs to the radical SAM superfamily. Biotin synthase family. Homodimer. The cofactor is [4Fe-4S] cluster. [2Fe-2S] cluster serves as cofactor.

It carries out the reaction (4R,5S)-dethiobiotin + (sulfur carrier)-SH + 2 reduced [2Fe-2S]-[ferredoxin] + 2 S-adenosyl-L-methionine = (sulfur carrier)-H + biotin + 2 5'-deoxyadenosine + 2 L-methionine + 2 oxidized [2Fe-2S]-[ferredoxin]. The protein operates within cofactor biosynthesis; biotin biosynthesis; biotin from 7,8-diaminononanoate: step 2/2. Catalyzes the conversion of dethiobiotin (DTB) to biotin by the insertion of a sulfur atom into dethiobiotin via a radical-based mechanism. This chain is Biotin synthase, found in Pseudomonas syringae pv. tomato (strain ATCC BAA-871 / DC3000).